Here is a 329-residue protein sequence, read N- to C-terminus: Probable alpha-1,2-galactosyltransferase gmh1 (329 aa).

Topologically, residues 1–14 are cytoplasmic; sequence MLSFFTKNTLTKRK. A helical; Signal-anchor for type II membrane protein membrane pass occupies residues 15-35; it reads LIMLALAIVFTFFAFGLYFIP. The Lumenal portion of the chain corresponds to 36–329; sequence HDEISVFDFK…LWTKYKDKII (294 aa). N-linked (GlcNAc...) asparagine glycans are attached at residues asparagine 127 and asparagine 169.

It belongs to the glycosyltransferase 34 family.

The protein localises to the golgi apparatus membrane. The sequence is that of Probable alpha-1,2-galactosyltransferase gmh1 (gmh1) from Schizosaccharomyces pombe (strain 972 / ATCC 24843) (Fission yeast).